We begin with the raw amino-acid sequence, 1052 residues long: Protein HelA (1052 aa).

Helical transmembrane passes span 14–34 (WFVL…FQRL), 121–141 (LPPG…EIFM), 348–368 (GALL…AALI), 369–389 (TAMV…ENQI), 393–413 (LMSL…IIVE), 450–470 (SIFG…LTGV), 483–503 (IIAL…AVAI), 537–557 (VVIS…FHLG), 878–898 (LQIV…ISFG), 903–923 (ALLV…ALWL), 934–954 (VGFI…ITFI), 979–999 (PVLM…LATG), and 1011–1031 (VVIG…PGLY).

The protein belongs to the resistance-nodulation-cell division (RND) (TC 2.A.6) family.

Its subcellular location is the cell inner membrane. Functionally, presumed to function with HelC and HelB in efflux of an unidentified substrate. The polypeptide is Protein HelA (helA) (Legionella pneumophila).